Consider the following 447-residue polypeptide: Chaperone protein dnaJ A7B, chloroplastic (447 aa).

A chloroplast-targeting transit peptide spans 1–86 (MALLQFGGTL…HRRSSRFIVR (86 aa)). A J domain is found at 90–154 (DFYSTLGVSR…EKRSIYDKYG (65 aa)). A CR-type zinc finger spans residues 217–298 (GVEKEIEITR…CGGDGRVRKT (82 aa)). Residues cysteine 230, cysteine 233, cysteine 247, cysteine 250, cysteine 273, cysteine 276, cysteine 286, and cysteine 289 each coordinate Zn(2+). CXXCXGXG motif repeat units follow at residues 230-237 (CNTCDGTG), 247-254 (CKTCGGQG), 273-280 (CNTCGGTG), and 286-293 (CNTCGGDG).

This sequence belongs to the DnaJ family. Interacts with PCNA. Expressed in roots, stems, leaves and panicles.

It is found in the plastid. The protein localises to the chloroplast. Its function is as follows. Plays pivotal roles in chloroplast development. Is essential for the regulation of chloroplast development and differentiation. In Oryza sativa subsp. japonica (Rice), this protein is Chaperone protein dnaJ A7B, chloroplastic.